The primary structure comprises 305 residues: HTH-type transcriptional regulator KdgR (305 aa).

Residues 55–116 (VSSVLKVFGI…GESEKYSLTL (62 aa)) form the HTH iclR-type domain. A DNA-binding region (H-T-H motif) is located at residues 76 to 95 (ITELSQRVMMSKSTVYRFLQ). The 170-residue stretch at 131–300 (LIRSADIQMR…ARNISDQMGY (170 aa)) folds into the IclR-ED domain.

As to quaternary structure, homodimer.

The protein resides in the cytoplasm. In terms of biological role, transcriptional repressor that negatively regulates the expression of genes involved in pectinolysis and in pectinase secretion. Controls genes involved in pectin catabolism, including the pectinase genes (pelA, pelB, pelC, pelE), genes involved in pectin catabolism (kdgT, ogl, kduI-kdgF) and the outT gene involved in pectinase secretion. Acts by binding directly to KdgR binding sites (KdgR-box) in the gene operator/promoter region. The chain is HTH-type transcriptional regulator KdgR from Dickeya chrysanthemi (Pectobacterium chrysanthemi).